The following is a 1485-amino-acid chain: Chromosome partition protein MukB (1485 aa).

34-41 (GGNGAGKS) serves as a coordination point for ATP. 2 coiled-coil regions span residues 311–480 (EMAR…EAYR) and 519–665 (GARL…RLSQ). The segment at 666-783 (PGGAEDARLI…SLPLFGRAAR (118 aa)) is flexible hinge. 2 coiled-coil regions span residues 832-1115 (NDPE…QAKA) and 1209-1265 (IDAI…LQSV).

It belongs to the SMC family. MukB subfamily. As to quaternary structure, homodimerization via its hinge domain. Binds to DNA via its C-terminal region. Interacts, and probably forms a ternary complex, with MukE and MukF via its C-terminal region. The complex formation is stimulated by calcium or magnesium. Interacts with tubulin-related protein FtsZ.

The protein resides in the cytoplasm. It localises to the nucleoid. Its function is as follows. Plays a central role in chromosome condensation, segregation and cell cycle progression. Functions as a homodimer, which is essential for chromosome partition. Involved in negative DNA supercoiling in vivo, and by this means organize and compact chromosomes. May achieve or facilitate chromosome segregation by condensation DNA from both sides of a centrally located replisome during cell division. The polypeptide is Chromosome partition protein MukB (Edwardsiella ictaluri (strain 93-146)).